The following is an 894-amino-acid chain: Alanine--tRNA ligase (894 aa).

Zn(2+) is bound by residues His587, His591, Cys691, and His695. Residues 739 to 758 (AEGDRAAEEAKGRLQEERDA) form a disordered region.

This sequence belongs to the class-II aminoacyl-tRNA synthetase family. It depends on Zn(2+) as a cofactor.

The protein localises to the cytoplasm. It carries out the reaction tRNA(Ala) + L-alanine + ATP = L-alanyl-tRNA(Ala) + AMP + diphosphate. Its function is as follows. Catalyzes the attachment of alanine to tRNA(Ala) in a two-step reaction: alanine is first activated by ATP to form Ala-AMP and then transferred to the acceptor end of tRNA(Ala). Also edits incorrectly charged Ser-tRNA(Ala) and Gly-tRNA(Ala) via its editing domain. The protein is Alanine--tRNA ligase of Cenarchaeum symbiosum (strain A).